The chain runs to 577 residues: Cell adhesion molecule CEACAM20 (577 aa).

The N-terminal stretch at 1-30 (MELAGFHCCSWTVILLSALLPTTWRPPAAA) is a signal peptide. Residues 31-430 (HFIHRADLLS…LQSSSMSPGA (400 aa)) are Extracellular-facing. 4 consecutive Ig-like C2-type domains span residues 48–137 (PLAK…ASLT), 142–223 (PDPV…TNLS), 239–324 (PNIE…LKLT), and 329–415 (PDQV…ASVL). An intrachain disulfide couples C72 to C120. N-linked (GlcNAc...) asparagine glycosylation is found at N78 and N102. Disulfide bonds link C259–C307 and C358–C399. N289 carries an N-linked (GlcNAc...) asparagine glycan. Residues 431–451 (IAGIVIGILVAIALAIGLGYF) form a helical membrane-spanning segment. Residues 452–577 (LYSTKDRWTR…SLYCKITPSA (126 aa)) are Cytoplasmic-facing. The segment at 461 to 568 (RRRSASDTTS…YEKLLNSNHS (108 aa)) is disordered. Polar residues predominate over residues 474–484 (IPPTSVMQSTP). Basic and acidic residues predominate over residues 516 to 526 (DSPEQFYEKKP). The span at 536–551 (KPLPQIPKQPLMPPGP) shows a compositional bias: pro residues. A phosphotyrosine mark is found at Y559 and Y570.

This sequence belongs to the immunoglobulin superfamily. CEA family. Interacts (via extracellular domain) with PTPRH (via extracellular domain); the interaction dephosphorylates CEACAM20. Interacts (phosphorylated form) with SYK (via SH2 domains); the interaction further enhances CEACAM20 phosphorylation. Post-translationally, phosphorylated on tyrosine residues by SYK, SRC and FYN in vitro. In terms of tissue distribution, strongly expressed in the small intestine and colon (at protein level). Minimal expression in other tissues (at protein level). Highly expressed in cecum, colon, ileum, jejunum, and testis, and also detected at lower levels in salivary gland and thymus.

The protein resides in the cell projection. The protein localises to the microvillus membrane. It is found in the apical cell membrane. Together with the tyrosine-protein kinase SYK, enhances production of the cytokine CXCL8/IL-8 via the NFKB pathway and may thus have a role in the intestinal immune response. The protein is Cell adhesion molecule CEACAM20 of Mus musculus (Mouse).